We begin with the raw amino-acid sequence, 329 residues long: GMP reductase (329 aa).

The active-site Thioimidate intermediate is Cys178. 207–230 (VIADGGIRTHGDVAKSIRMGATMV) provides a ligand contact to NADP(+).

Belongs to the IMPDH/GMPR family. GuaC type 2 subfamily.

It carries out the reaction IMP + NH4(+) + NADP(+) = GMP + NADPH + 2 H(+). Its function is as follows. Catalyzes the irreversible NADPH-dependent deamination of GMP to IMP. It functions in the conversion of nucleobase, nucleoside and nucleotide derivatives of G to A nucleotides, and in maintaining the intracellular balance of A and G nucleotides. The protein is GMP reductase of Lactococcus lactis subsp. cremoris (strain MG1363).